Here is a 297-residue protein sequence, read N- to C-terminus: Malonyl-[acyl-carrier protein] O-methyltransferase (297 aa).

This sequence belongs to the methyltransferase superfamily.

The enzyme catalyses malonyl-[ACP] + S-adenosyl-L-methionine = malonyl-[ACP] methyl ester + S-adenosyl-L-homocysteine. The protein operates within cofactor biosynthesis; biotin biosynthesis. Functionally, converts the free carboxyl group of a malonyl-thioester to its methyl ester by transfer of a methyl group from S-adenosyl-L-methionine (SAM). It allows to synthesize pimeloyl-ACP via the fatty acid synthetic pathway. The protein is Malonyl-[acyl-carrier protein] O-methyltransferase of Laribacter hongkongensis (strain HLHK9).